The primary structure comprises 690 residues: Protein AC23 (690 aa).

An N-terminal signal peptide occupies residues 1-37; it reads MLACKFSQYQAFIMDGVKLLGTCALIILLSTTSTVVG.

It is found in the virion. Its function is as follows. Pathogenicity factor that accelerates mortality in the host insect. This chain is Protein AC23, found in Autographa californica nuclear polyhedrosis virus (AcMNPV).